The primary structure comprises 158 residues: Transcriptional repressor NrdR (158 aa).

Residues 1-22 (MRCPFCGSDDTQVKDSRPAEDN) form a disordered region. A zinc finger spans residues 3 to 34 (CPFCGSDDTQVKDSRPAEDNSAIRRRRICPDC). Positions 11–22 (TQVKDSRPAEDN) are enriched in basic and acidic residues. The 91-residue stretch at 49–139 (LTVLKKTGRK…VYRDFSHAED (91 aa)) folds into the ATP-cone domain.

The protein belongs to the NrdR family. The cofactor is Zn(2+).

Negatively regulates transcription of bacterial ribonucleotide reductase nrd genes and operons by binding to NrdR-boxes. The protein is Transcriptional repressor NrdR of Allorhizobium ampelinum (strain ATCC BAA-846 / DSM 112012 / S4) (Agrobacterium vitis (strain S4)).